The following is a 245-amino-acid chain: Carboxymethylenebutenolidase homolog (245 aa).

The residue at position 2 (Ala2) is an N-acetylalanine. N6-acetyllysine is present on Lys36. Catalysis depends on residues Cys132, Asp179, and His212. A Phosphoserine modification is found at Ser223.

Belongs to the dienelactone hydrolase family. In terms of tissue distribution, widely expressed, with highest levels in liver, followed by kidney, small intestine and colon. Present in liver and intestine (at protein level).

The protein resides in the cytoplasm. The protein localises to the cytosol. Its activity is regulated as follows. Strongly inhibited by p-chloromercuribenzoate (PCMB). Partially inhibited by bis-p-nitrophenylphosphate (BNPP). Not inhibited by DFP, PMSF, eserine or EDTA. In terms of biological role, cysteine hydrolase. Can convert the prodrug olmesartan medoxomil into its pharmacologically active metabolite olmerstatan, an angiotensin receptor blocker, in liver and intestine. May also activate beta-lactam antibiotics faropenem medoxomil and lenampicillin. In Homo sapiens (Human), this protein is Carboxymethylenebutenolidase homolog (CMBL).